Here is a 387-residue protein sequence, read N- to C-terminus: Large ribosomal subunit protein uL3 (387 aa).

Belongs to the universal ribosomal protein uL3 family.

It localises to the cytoplasm. This Candida glabrata (strain ATCC 2001 / BCRC 20586 / JCM 3761 / NBRC 0622 / NRRL Y-65 / CBS 138) (Yeast) protein is Large ribosomal subunit protein uL3 (RPL3).